Reading from the N-terminus, the 433-residue chain is MRMIDIIEKKRDGKSLTKEEIEFFVNGYTHGEVPDYQASSLAMAIFFQDMNDEERAALTMSMVNSGEKIDLSDINGIKVDKHSTGGVGDTTTLVLAPLVAAVGVPVAKMSGRGLGHTGGTIDKLESVKGFNVEISEKDFIKLVNDNQVAVIGQSGNLTPADKKLYALRDVTGTVNSIPLIASSIMSKKIAAGADAIVLDVKTGSGAFMKTLDDAEALAHAMVRIGNNVGRNTMAIISDMSQPLGNAIGNALELKEAIATLKGNGPKDLTELVLTLGSQMVVLAEQATSLDEARQMLIDAIKTGKALNKFKTFLSNQGGDDSIVDSPEKLPSAKYQVEFKAKKDGYITEIIANEIGVASMMLGAGRQTKEDVIDLGVGIVLNKKVGEHVEKGENILTIHTNTKEIDDILYKLDNSITIESKGEAPTLIHKIITE.

Position 81–83 (81–83 (KHS)) interacts with phosphate. K(+)-binding residues include G88 and T90. Phosphate-binding positions include T92, 108–110 (KMS), and T120. R168 and K187 together coordinate substrate. K(+)-binding residues include L243, A246, and E255.

It belongs to the thymidine/pyrimidine-nucleoside phosphorylase family. As to quaternary structure, homodimer. K(+) is required as a cofactor.

It catalyses the reaction uridine + phosphate = alpha-D-ribose 1-phosphate + uracil. It carries out the reaction thymidine + phosphate = 2-deoxy-alpha-D-ribose 1-phosphate + thymine. The catalysed reaction is 2'-deoxyuridine + phosphate = 2-deoxy-alpha-D-ribose 1-phosphate + uracil. Its function is as follows. Catalyzes phosphorolysis of the pyrimidine nucleosides uridine, thymidine and 2'-deoxyuridine with the formation of the corresponding pyrimidine base and ribose-1-phosphate. The polypeptide is Pyrimidine-nucleoside phosphorylase (pdp) (Staphylococcus epidermidis (strain ATCC 35984 / DSM 28319 / BCRC 17069 / CCUG 31568 / BM 3577 / RP62A)).